The sequence spans 156 residues: D-aminoacyl-tRNA deacylase (156 aa).

The Gly-cisPro motif, important for rejection of L-amino acids signature appears at 137–138 (GP).

It belongs to the DTD family. Homodimer.

The protein localises to the cytoplasm. The enzyme catalyses glycyl-tRNA(Ala) + H2O = tRNA(Ala) + glycine + H(+). It catalyses the reaction a D-aminoacyl-tRNA + H2O = a tRNA + a D-alpha-amino acid + H(+). Functionally, an aminoacyl-tRNA editing enzyme that deacylates mischarged D-aminoacyl-tRNAs. Also deacylates mischarged glycyl-tRNA(Ala), protecting cells against glycine mischarging by AlaRS. Acts via tRNA-based rather than protein-based catalysis; rejects L-amino acids rather than detecting D-amino acids in the active site. By recycling D-aminoacyl-tRNA to D-amino acids and free tRNA molecules, this enzyme counteracts the toxicity associated with the formation of D-aminoacyl-tRNA entities in vivo and helps enforce protein L-homochirality. In Dictyoglomus turgidum (strain DSM 6724 / Z-1310), this protein is D-aminoacyl-tRNA deacylase.